The following is a 1303-amino-acid chain: D-lysergyl-peptide-synthetase subunit 2 (1303 aa).

The segment at 256 to 653 (EWCRWTPSAV…CRKSTQVKLR (398 aa)) is adenylation (A) domain. The 77-residue stretch at 793–869 (APSNDIEEAF…ELARHTKLVA (77 aa)) folds into the Carrier domain. Ser830 carries the O-(pantetheine 4'-phosphoryl)serine modification. The interval 905–1294 (EDVYPCTPLQ…HAAPRTLIGD (390 aa)) is condensation (C) domain.

This sequence belongs to the NRP synthetase family.

The protein operates within alkaloid biosynthesis; ergot alkaloid biosynthesis. Its function is as follows. D-lysergyl-peptide-synthetase subunit 2; part of the gene cluster that mediates the biosynthesis of fungal ergot alkaloid. DmaW catalyzes the first step of ergot alkaloid biosynthesis by condensing dimethylallyl diphosphate (DMAP) and tryptophan to form 4-dimethylallyl-L-tryptophan. The second step is catalyzed by the methyltransferase easF that methylates 4-dimethylallyl-L-tryptophan in the presence of S-adenosyl-L-methionine, resulting in the formation of 4-dimethylallyl-L-abrine. The catalase easC and the FAD-dependent oxidoreductase easE then transform 4-dimethylallyl-L-abrine to chanoclavine-I which is further oxidized by easD in the presence of NAD(+), resulting in the formation of chanoclavine-I aldehyde. Agroclavine dehydrogenase easG then mediates the conversion of chanoclavine-I aldehyde to agroclavine via a non-enzymatic adduct reaction: the substrate is an iminium intermediate that is formed spontaneously from chanoclavine-I aldehyde in the presence of glutathione. The presence of easA is not required to complete this reaction. Further conversion of agroclavine to paspalic acid is a two-step process involving oxidation of agroclavine to elymoclavine and of elymoclavine to paspalic acid, the second step being performed by the elymoclavine oxidase cloA. Paspalic acid is then further converted to D-lysergic acid. Ergopeptines are assembled from D-lysergic acid and three different amino acids by the D-lysergyl-peptide-synthetases composed each of a monomudular and a trimodular nonribosomal peptide synthetase subunit. LpsB and lpsC encode the monomodular subunits responsible for D-lysergic acid activation and incorporation into the ergopeptine backbone. LpsA1 and A2 subunits encode the trimodular nonribosomal peptide synthetase assembling the tripeptide portion of ergopeptines. LpsA1 is responsible for formation of the major ergopeptine, ergotamine, and lpsA2 for alpha-ergocryptine, the minor ergopeptine of the total alkaloid mixture elaborated by C.purpurea. D-lysergyl-tripeptides are assembled by the nonribosomal peptide synthetases and released as N-(D-lysergyl-aminoacyl)-lactams. Cyclolization of the D-lysergyl-tripeptides is performed by the Fe(2+)/2-ketoglutarate-dependent dioxygenase easH which introduces a hydroxyl group into N-(D-lysergyl-aminoacyl)-lactam at alpha-C of the aminoacyl residue followed by spontaneous condensation with the terminal lactam carbonyl group. This is D-lysergyl-peptide-synthetase subunit 2 from Claviceps purpurea (strain 20.1) (Ergot fungus).